We begin with the raw amino-acid sequence, 151 residues long: Nucleoside diphosphate kinase (151 aa).

6 residues coordinate ATP: Lys11, Phe59, Arg87, Thr93, Arg104, and Asn114. His117 (pros-phosphohistidine intermediate) is an active-site residue.

Belongs to the NDK family. As to quaternary structure, homohexamer. Requires Mg(2+) as cofactor.

The enzyme catalyses a 2'-deoxyribonucleoside 5'-diphosphate + ATP = a 2'-deoxyribonucleoside 5'-triphosphate + ADP. It catalyses the reaction a ribonucleoside 5'-diphosphate + ATP = a ribonucleoside 5'-triphosphate + ADP. Functionally, major role in the synthesis of nucleoside triphosphates other than ATP. The ATP gamma phosphate is transferred to the NDP beta phosphate via a ping-pong mechanism, using a phosphorylated active-site intermediate. In Ginglymostoma cirratum (Nurse shark), this protein is Nucleoside diphosphate kinase.